A 114-amino-acid polypeptide reads, in one-letter code: MDSKWAAVLLLLLLLRNWGHAEEAGSWGEDQVFAEEDKGPHPSQYAHTPDRIQTPGSLMRVLLQAMERPRRNPAFLFQPQRFGRNAWGPWSKEQLSPQAREFWSLAAPQRFGKK.

Residues 1–21 form the signal peptide; it reads MDSKWAAVLLLLLLLRNWGHA. Residues 22 to 69 constitute a propeptide that is removed on maturation; sequence EEAGSWGEDQVFAEEDKGPHPSQYAHTPDRIQTPGSLMRVLLQAMERP. Residues 29-51 form a disordered region; it reads EDQVFAEEDKGPHPSQYAHTPDR. Residue phenylalanine 82 is modified to Phenylalanine amide. A propeptide spanning residues 85–100 is cleaved from the precursor; the sequence is NAWGPWSKEQLSPQAR. At phenylalanine 111 the chain carries Phenylalanine amide.

It belongs to the FARP (FMRFamide related peptide) family.

It localises to the secreted. In terms of biological role, morphine modulating peptides. Have wide-ranging physiologic effects, including the modulation of morphine-induced analgesia, elevation of arterial blood pressure, and increased somatostatin secretion from the pancreas. Neuropeptide FF and SF potentiate and sensitize ASIC2 and ASIC3 channels. The protein is Pro-FMRFamide-related neuropeptide FF (Npff) of Rattus norvegicus (Rat).